The chain runs to 544 residues: Ribosomal protein S6 kinase-like 1 (544 aa).

Residues 87–115 form the MIT domain; it reads VHVDPNKERREAVKLKITKYLRRAEEIFN. Residues 145-534 enclose the Protein kinase domain; sequence SALEQLKGCR…TSRLKSHPFF (390 aa). Residues 151–159 and Lys177 each bind ATP; that span reads KGCRVVGII. 2 disordered regions span residues 262–344 and 353–372; these read PAEL…HWVR and AYGR…SLGS. Over residues 303–313 the composition is skewed to polar residues; the sequence is SRPSAVFSSDP. Residue Asp407 is the Proton acceptor of the active site.

Belongs to the protein kinase superfamily. Ser/Thr protein kinase family. S6 kinase subfamily.

The catalysed reaction is L-seryl-[protein] + ATP = O-phospho-L-seryl-[protein] + ADP + H(+). The enzyme catalyses L-threonyl-[protein] + ATP = O-phospho-L-threonyl-[protein] + ADP + H(+). This is Ribosomal protein S6 kinase-like 1 (Rps6kl1) from Mus musculus (Mouse).